Reading from the N-terminus, the 317-residue chain is Thymidylate synthase (317 aa).

DUMP-binding positions include arginine 40 and 167–168 (RR). Cysteine 187 (nucleophile) is an active-site residue. Residues 216-219 (RSCD), asparagine 227, and 257-259 (HVY) each bind dUMP. Position 219 (aspartate 219) interacts with (6R)-5,10-methylene-5,6,7,8-tetrahydrofolate.

It belongs to the thymidylate synthase family. As to quaternary structure, homodimer.

It catalyses the reaction dUMP + (6R)-5,10-methylene-5,6,7,8-tetrahydrofolate = 7,8-dihydrofolate + dTMP. Its pathway is pyrimidine metabolism; dTTP biosynthesis. This is Thymidylate synthase (TMP1) from Cryptococcus neoformans var. neoformans serotype D (strain B-3501A) (Filobasidiella neoformans).